A 342-amino-acid chain; its full sequence is RNA 3'-terminal phosphate cyclase (342 aa).

Residues Q103 and 283–287 (YLADQ) contribute to the ATP site. Catalysis depends on H308, which acts as the Tele-AMP-histidine intermediate.

This sequence belongs to the RNA 3'-terminal cyclase family. Type 1 subfamily.

It localises to the cytoplasm. The catalysed reaction is a 3'-end 3'-phospho-ribonucleotide-RNA + ATP = a 3'-end 2',3'-cyclophospho-ribonucleotide-RNA + AMP + diphosphate. Functionally, catalyzes the conversion of 3'-phosphate to a 2',3'-cyclic phosphodiester at the end of RNA. The mechanism of action of the enzyme occurs in 3 steps: (A) adenylation of the enzyme by ATP; (B) transfer of adenylate to an RNA-N3'P to produce RNA-N3'PP5'A; (C) and attack of the adjacent 2'-hydroxyl on the 3'-phosphorus in the diester linkage to produce the cyclic end product. The biological role of this enzyme is unknown but it is likely to function in some aspects of cellular RNA processing. This chain is RNA 3'-terminal phosphate cyclase (rtcA), found in Escherichia coli O157:H7.